The chain runs to 267 residues: Farnesyl diphosphate phosphatase YisP (267 aa).

This sequence belongs to the phytoene/squalene synthase family. As to quaternary structure, monomer.

The catalysed reaction is (2E,6E)-farnesyl diphosphate + H2O = (2E,6E)-farnesol + diphosphate. Diphosphate release from FPP is inhibited by zaragozic acid. Its function is as follows. A farnesyl diphosphate (FPP) phosphatase. Involved in biofilm formation, its disruption blocks biofilm synthesis which is restored by exogenous farnesol. Releases diphosphate from FPP, was initally suggested to be a squalene synthase. Diphosphate release is higher from FPP than geranyl pyrophosphate (GPP) or geranylgeranyl pyrophosphate (GGPP). Biofilm synthesis is partially restored by exogenous squalene, beta-carotene or retinol. Required for integrity of cell membrane lipid rafts. Involved in spatial organization of membranes, required for the flotillin-like proteins FloT and FloA to function correctly. The chain is Farnesyl diphosphate phosphatase YisP (yisP) from Bacillus subtilis (strain 168).